The following is a 317-amino-acid chain: OVARIAN TUMOR DOMAIN-containing deubiquitinating enzyme 4 (317 aa).

An OTU domain is found at 168-306 (YSIIGIPGDG…FGHYDALLLH (139 aa)). The active site involves Asp176. Catalysis depends on Cys179, which acts as the Nucleophile. His299 is an active-site residue.

The protein belongs to the peptidase C65 family.

The protein resides in the cytoplasm. It carries out the reaction Thiol-dependent hydrolysis of ester, thioester, amide, peptide and isopeptide bonds formed by the C-terminal Gly of ubiquitin (a 76-residue protein attached to proteins as an intracellular targeting signal).. Hydrolase that can remove conjugated ubiquitin from proteins in vitro and may therefore play an important regulatory role at the level of protein turnover by preventing degradation. Cysteine protease with a preference for 'Lys-63' over 'Lys-48'-linked over 'Met-1' ubiquitin (UB) tetramers (e.g. Ub3 and Ub4) as substrates. Also cleaves RUB-GST fusion. In Arabidopsis thaliana (Mouse-ear cress), this protein is OVARIAN TUMOR DOMAIN-containing deubiquitinating enzyme 4.